Here is a 1380-residue protein sequence, read N- to C-terminus: Mitogen-activated protein kinase kinase kinase 5 (1380 aa).

Residues 30–97 form a disordered region; it reads CRRGGGAATA…GNSGSGGGRR (68 aa). The span at 37–49 shows a compositional bias: low complexity; the sequence is ATAAEGEPSLQPL. The segment covering 50–59 has biased composition (pro residues); sequence LVPPPPPPPG. R85 and R87 each carry asymmetric dimethylarginine. S90 is subject to Phosphoserine; by PIM1 and PKB/AKT1. An interaction with PPIA/CYPA region spans residues 649-1374; sequence HCKRFFEMVN…MLCTLWKAII (726 aa). In terms of domain architecture, Protein kinase spans 687 to 945; sequence NGDRVVLGKG…ANDLLIDEFL (259 aa). ATP contacts are provided by residues 693 to 701 and K716; that span reads LGKGTYGIV. Phosphotyrosine is present on Y725. The active-site Proton acceptor is the D810. Phosphothreonine; by autocatalysis is present on T820. T845 is modified (phosphothreonine; by autocatalysis, MELK and MAP3K6). Position 849 is a phosphothreonine; by autocatalysis (T849). Position 965 is a phosphoserine (S965). S973 carries the post-translational modification Phosphoserine; by autocatalysis. A phosphoserine mark is found at S1036 and S1040. Positions 1188 to 1215 are disordered; the sequence is ASESDTADPEDLDVEDEHEELSSNQTVR. The span at 1192–1206 shows a compositional bias: acidic residues; the sequence is DTADPEDLDVEDEHE. The stretch at 1252–1292 forms a coiled coil; the sequence is LGRMKIETNRLLEELVRKERELQALLHQAIEEKDQEIRHLK.

Belongs to the protein kinase superfamily. STE Ser/Thr protein kinase family. MAP kinase kinase kinase subfamily. As to quaternary structure, homodimer when inactive. Binds both upstream activators and downstream substrates in multimolecular complexes. Part of a cytoplasmic complex made of HIPK1, DAB2IP and MAP3K5 in response to TNF. This complex formation promotes MAP3K5-JNK activation and subsequent apoptosis. Interacts with SOCS1 which recognizes phosphorylation of Tyr-725 and induces MAP3K5/ASK1 degradation in endothelial cells. Interacts with the 14-3-3 family proteins such as YWHAB, YWHAE, YWHAQ, YWHAH, YWHAZ and SFN. Interacts with ARRB2, BIRC2, DAB2IP, IGF1R, MAP3K6/ASK2, PIM1, PGAM5, SOCS1, STUB1, TRAF2 and TXN. Interacts with ERN1 in a TRAF2-dependent manner. Interacts with calcineurin subunit PPP3R1, PPP5C, PPM1L and TRAF6. Interacts (via N-terminus) with RAF1 and this interaction inhibits the proapoptotic function of MAP3K5. Interacts with DAB2IP (via N-terminus C2 domain); the interaction occurs in a TNF-alpha-dependent manner. Interacts with DUSP13A; may positively regulate apoptosis. Interacts with PPIA/CYPA. Interacts with PRMT1; the interaction results in MAP3K5 methylation by PRMT1 which inhibits MAP3K5 activation. Interacts with TRAF2; the interaction is inhibited by PRMT1. Interacts with TRIM48. Mg(2+) is required as a cofactor. Ser-90 and Ser-1040 are inactivating phosphorylation sites, the former of which is phosphorylated by AKT1. Phosphorylated at Ser-973 which induces association of MAP3K5/ASK1 with the 14-3-3 family proteins and suppresses MAP3K5/ASK1 activity. Calcineurin (CN) dephosphorylates this site. Also dephosphorylated and activated by PGAM5. Phosphorylated at Thr-845 through autophosphorylation and by MAP3K6/ASK2 which leads to activation. Thr-845 is dephosphorylated by PPP5C. Phosphorylation at Ser-973 in response to oxidative stress is negatively regulated by PPIA/CYPA. In terms of processing, ubiquitinated. Tumor necrosis factor (TNF) induces TNFR2-dependent ubiquitination, leading to proteasomal degradation. Ubiquitinated by RC3H2 in a TRIM48-dependent manner. Post-translationally, methylation at Arg-85 and Arg-87 by PRMT1 promotes association of MAP3K5 with thioredoxin and negatively regulates MAP3K5 association with TRAF2, inhibiting MAP3K5 activation. Methylation is blocked by ubiquitination of PRMT1 by TRIM48. In terms of tissue distribution, expressed in various adult mouse tissues including heart, brain, lung, liver and kidney.

Its subcellular location is the cytoplasm. It localises to the endoplasmic reticulum. It catalyses the reaction L-seryl-[protein] + ATP = O-phospho-L-seryl-[protein] + ADP + H(+). The catalysed reaction is L-threonyl-[protein] + ATP = O-phospho-L-threonyl-[protein] + ADP + H(+). With respect to regulation, activated by various stressors, including oxidative stress, endoplasmic reticulum stress, and calcium overload, as well as by receptor-mediated inflammatory signals, such as the tumor necrosis factor (TNF) and lipopolysaccharide (LPS). Homophilic association of MAP3K5/ASK1 through the C-terminal coiled-coil domains and the heteromeric complex formation of MAP3K5/ASK1 with the reduced form of thioredoxin (TXN), constitutes an inactive form of the kinase. Upon ROS-induced dissociation of TXN from MAP3K5/ASK1, TRAF2 and TRAF6 are reciprocally recruited to MAP3K5/ASK1 and form the active MAP3K5/ASK1 signalosome, in which TRAF2 and TRAF6 appear to facilitate the active configuration of MAP3K5/ASK1. MAP3K5/ASK1 activity is also regulated through several phosphorylation and dephosphorylation events. Thr-845 is an activating phosphorylation site that is autophosphorylated and phosphorylated by MAP3K6/ASK2 and dephosphorylated by PPP5C. Ser-90 and Ser-1040 are inactivating phosphorylation sites, the former of which is phosphorylated by AKT1. Phosphorylation of Ser-973 induces association of MAP3K5/ASK1 with the 14-3-3 family proteins, which suppresses MAP3K5/ASK1 activity. Calcium/calmodulin-activated protein phosphatase calcineurin (PPP3CA) has been shown to directly dephosphorylate this site. SOCS1 binds to ASK1 by recognizing phosphorylation of Tyr-725 and induces MAP3K5/ASK1 degradation in endothelial cells. Also dephosphorylated and activated by PGAM5. Contains an N-terminal autoinhibitory domain. Serine/threonine kinase which acts as an essential component of the MAP kinase signal transduction pathway. Plays an important role in the cascades of cellular responses evoked by changes in the environment. Mediates signaling for determination of cell fate such as differentiation and survival. Plays a crucial role in the apoptosis signal transduction pathway through mitochondria-dependent caspase activation. MAP3K5/ASK1 is required for the innate immune response, which is essential for host defense against a wide range of pathogens. Mediates signal transduction of various stressors like oxidative stress as well as by receptor-mediated inflammatory signals, such as the tumor necrosis factor (TNF) or lipopolysaccharide (LPS). Once activated, acts as an upstream activator of the MKK/JNK signal transduction cascade and the p38 MAPK signal transduction cascade through the phosphorylation and activation of several MAP kinase kinases like MAP2K4/SEK1, MAP2K3/MKK3, MAP2K6/MKK6 and MAP2K7/MKK7. These MAP2Ks in turn activate p38 MAPKs and c-jun N-terminal kinases (JNKs). Both p38 MAPK and JNKs control the transcription factors activator protein-1 (AP-1). The chain is Mitogen-activated protein kinase kinase kinase 5 (Map3k5) from Mus musculus (Mouse).